We begin with the raw amino-acid sequence, 120 residues long: NAD(P)H-quinone oxidoreductase subunit 3, chloroplastic (120 aa).

A run of 3 helical transmembrane segments spans residues Ile9–Gly29, Met64–Met84, and Val88–Leu108.

This sequence belongs to the complex I subunit 3 family. NDH is composed of at least 16 different subunits, 5 of which are encoded in the nucleus.

Its subcellular location is the plastid. It localises to the chloroplast thylakoid membrane. The enzyme catalyses a plastoquinone + NADH + (n+1) H(+)(in) = a plastoquinol + NAD(+) + n H(+)(out). It carries out the reaction a plastoquinone + NADPH + (n+1) H(+)(in) = a plastoquinol + NADP(+) + n H(+)(out). Functionally, NDH shuttles electrons from NAD(P)H:plastoquinone, via FMN and iron-sulfur (Fe-S) centers, to quinones in the photosynthetic chain and possibly in a chloroplast respiratory chain. The immediate electron acceptor for the enzyme in this species is believed to be plastoquinone. Couples the redox reaction to proton translocation, and thus conserves the redox energy in a proton gradient. The sequence is that of NAD(P)H-quinone oxidoreductase subunit 3, chloroplastic from Aethionema cordifolium (Lebanon stonecress).